Consider the following 193-residue polypeptide: FMN-dependent NADH:quinone oxidoreductase 1 (193 aa).

Residues S9, 15–17, and 85–88 each bind FMN; these read SIS and MYNF.

The protein belongs to the azoreductase type 1 family. Homodimer. Requires FMN as cofactor.

The enzyme catalyses 2 a quinone + NADH + H(+) = 2 a 1,4-benzosemiquinone + NAD(+). The catalysed reaction is N,N-dimethyl-1,4-phenylenediamine + anthranilate + 2 NAD(+) = 2-(4-dimethylaminophenyl)diazenylbenzoate + 2 NADH + 2 H(+). Functionally, quinone reductase that provides resistance to thiol-specific stress caused by electrophilic quinones. In terms of biological role, also exhibits azoreductase activity. Catalyzes the reductive cleavage of the azo bond in aromatic azo compounds to the corresponding amines. The sequence is that of FMN-dependent NADH:quinone oxidoreductase 1 from Xanthomonas axonopodis pv. citri (strain 306).